The following is a 118-amino-acid chain: Large ribosomal subunit protein bL20 (118 aa).

Belongs to the bacterial ribosomal protein bL20 family.

Functionally, binds directly to 23S ribosomal RNA and is necessary for the in vitro assembly process of the 50S ribosomal subunit. It is not involved in the protein synthesizing functions of that subunit. The chain is Large ribosomal subunit protein bL20 from Hamiltonella defensa subsp. Acyrthosiphon pisum (strain 5AT).